We begin with the raw amino-acid sequence, 488 residues long: Capsid protein (488 aa).

Acidic residues predominate over residues 80–93 (ISEDESDSGEEPEF). Residues 80–143 (ISEDESDSGE…QPKTIPGQKQ (64 aa)) are disordered. Residues 94–109 (EQVRMDRTGGTEIPKE) are compositionally biased toward basic and acidic residues. The short motif at 121-124 (RKRK) is the Nuclear localization signal element. The span at 134–143 (QPKTIPGQKQ) shows a compositional bias: polar residues. The CCHC-type zinc finger occupies 410-427 (CRCWICNIEGHYANECPN). Residues 463–488 (YKEEEEETSTEESDDESSTSEDSDSD) are disordered. The segment covering 464 to 488 (KEEEEETSTEESDDESSTSEDSDSD) has biased composition (acidic residues).

Belongs to the caulimoviridae capsid protein family. Interacts (via nuclear localization signal) with host importin alpha.

It is found in the virion. The protein localises to the host nucleus. Functionally, self assembles to form an icosahedral capsid, about 50 nm in diameter, nm, composed of 420 subunits of the viral capsid protein. The capsid encapsulates the genomic dsDNA. Following virus entry into host cell, provides nuclear import of the viral genome. Virus particles do not enter the nucleus, but dock at the nuclear membrane through the interaction with host importins. This is Capsid protein from Arabidopsis thaliana (Mouse-ear cress).